A 127-amino-acid chain; its full sequence is Protein ApaG (127 aa).

The 125-residue stretch at 3–127 folds into the ApaG domain; it reads DDPRYRVEVE…FVLSVPRTLH (125 aa).

This Xanthomonas campestris pv. campestris (strain 8004) protein is Protein ApaG.